A 191-amino-acid polypeptide reads, in one-letter code: Thymidine kinase (191 aa).

Residues glycine 9–threonine 16 and aspartate 85–glutamine 88 contribute to the ATP site. The Proton acceptor role is filled by glutamate 86. Zn(2+)-binding residues include cysteine 143, cysteine 146, cysteine 181, and cysteine 184.

It belongs to the thymidine kinase family. In terms of assembly, homotetramer.

The protein resides in the cytoplasm. It carries out the reaction thymidine + ATP = dTMP + ADP + H(+). The chain is Thymidine kinase from Listeria monocytogenes serovar 1/2a (strain ATCC BAA-679 / EGD-e).